Consider the following 222-residue polypeptide: Small ribosomal subunit protein uS3 (222 aa).

Residues 38–106 (IRKFISEKLA…NVHINIVEIK (69 aa)) enclose the KH type-2 domain.

It belongs to the universal ribosomal protein uS3 family. Part of the 30S ribosomal subunit. Forms a tight complex with proteins S10 and S14.

Its function is as follows. Binds the lower part of the 30S subunit head. Binds mRNA in the 70S ribosome, positioning it for translation. This is Small ribosomal subunit protein uS3 from Lactobacillus johnsonii (strain CNCM I-12250 / La1 / NCC 533).